Reading from the N-terminus, the 403-residue chain is D-mannonate dehydratase CC0532 (403 aa).

Residues Asn38 and His123 each contribute to the substrate site. Tyr160 functions as the Proton donor/acceptor in the catalytic mechanism. Position 211 (Asp211) interacts with Mg(2+). The active-site Proton donor/acceptor is His213. Mg(2+) contacts are provided by Glu237 and Glu263. Residues Glu263, Arg284, His313, Asp317, and Glu340 each contribute to the substrate site.

The protein belongs to the mandelate racemase/muconate lactonizing enzyme family. GalD subfamily. It depends on Mg(2+) as a cofactor.

The catalysed reaction is D-mannonate = 2-dehydro-3-deoxy-D-gluconate + H2O. Its pathway is carbohydrate metabolism; pentose and glucuronate interconversion. Functionally, catalyzes the dehydration of D-mannonate. Has no detectable activity with a panel of 70 other acid sugars (in vitro). The sequence is that of D-mannonate dehydratase CC0532 from Caulobacter vibrioides (strain ATCC 19089 / CIP 103742 / CB 15) (Caulobacter crescentus).